Here is a 272-residue protein sequence, read N- to C-terminus: 2-C-methyl-D-erythritol 4-phosphate cytidylyltransferase (272 aa).

Belongs to the IspD/TarI cytidylyltransferase family. IspD subfamily.

It carries out the reaction 2-C-methyl-D-erythritol 4-phosphate + CTP + H(+) = 4-CDP-2-C-methyl-D-erythritol + diphosphate. The protein operates within isoprenoid biosynthesis; isopentenyl diphosphate biosynthesis via DXP pathway; isopentenyl diphosphate from 1-deoxy-D-xylulose 5-phosphate: step 2/6. Functionally, catalyzes the formation of 4-diphosphocytidyl-2-C-methyl-D-erythritol from CTP and 2-C-methyl-D-erythritol 4-phosphate (MEP). The protein is 2-C-methyl-D-erythritol 4-phosphate cytidylyltransferase of Xanthomonas oryzae pv. oryzae (strain PXO99A).